A 495-amino-acid polypeptide reads, in one-letter code: MSAVPGPVYGLEVPPGEILIPAAMEFPASSLSVAGASFATPLVLPAGDLNSNQKILQFRITMAAVDPTEEPEADGEGNIPTVPRSTLRLVKRALPGLEDEDDEIDDEYMKALLAGSDDEEDSDEEANGGPSDPAKAKKQRQAAAIKKLLESAQEESDEEMEDAKPNGKAKGKAKATEESDDDEDEDSDDDSEEGADLENFVICTLDTERNYQQPLDITVNHGEKVFFVVTGSHTIYLTGNYIMDDDEDDEDSEDEDEYDLSPDELEYGLEGDDSDASDDLDGLEDPRVEEIDTDEEEAPKLVAANKGKNKRAAEEAAGLDELITKEDAKLSKKQQKKLKNNKGEAVAAEEKKDAKKVQFAKNLEQGPTGSTTEKPKQAKDSKPATGVKVVQGVTVDDRTVGNGRTVKSGDTVGVRYIGKLQNGKQFDANKKGKPFSFKAGKGQVIKGWDIGVIGMAIGGERRLTIPAHLAYGSRGLPGIPANSTLIFDVKLLEIK.

Disordered stretches follow at residues 115–198 (GSDD…ADLE), 243–312 (MDDD…NKRA), and 333–385 (KQQK…KPAT). Acidic residues-rich tracts occupy residues 116 to 126 (SDDEEDSDEEA), 152 to 161 (AQEESDEEME), 178 to 196 (ESDD…EGAD), and 243 to 283 (MDDD…LDGL). Residues 373–382 (EKPKQAKDSK) show a composition bias toward basic and acidic residues. The PPIase FKBP-type domain maps to 409-495 (GDTVGVRYIG…IFDVKLLEIK (87 aa)).

It belongs to the FKBP-type PPIase family. FKBP3/4 subfamily. As to quaternary structure, binds to histones H3 and H4.

The protein localises to the nucleus. The enzyme catalyses [protein]-peptidylproline (omega=180) = [protein]-peptidylproline (omega=0). Its activity is regulated as follows. Inhibited by both FK506 and rapamycin. In terms of biological role, PPIase that acts as a histone chaperone. Histone proline isomerase that increases the rate of cis-trans isomerization at prolines on the histone H3 N-terminal tail. Proline isomerization influences H3 methylation thereby regulating gene expression. The sequence is that of FK506-binding protein 4 (FPR4) from Gibberella zeae (strain ATCC MYA-4620 / CBS 123657 / FGSC 9075 / NRRL 31084 / PH-1) (Wheat head blight fungus).